The sequence spans 478 residues: G2/mitotic-specific cyclin-B (478 aa).

The segment at Met1–Arg153 is disordered. Over residues Ala16–Ala31 the composition is skewed to low complexity. Residues Asp65–Lys74 show a composition bias toward basic and acidic residues. Over residues Ser77–Arg102 the composition is skewed to polar residues. Over residues Asn110–Arg121 the composition is skewed to basic and acidic residues. The span at Lys133 to Thr145 shows a compositional bias: polar residues.

This sequence belongs to the cyclin family. Cyclin AB subfamily.

Essential for the control of the cell cycle at the G2/M (mitosis) transition. Interacts with the CDC2 protein kinase to form MPF. G2/M cyclins accumulate steadily during G2 and are abruptly destroyed at mitosis. The polypeptide is G2/mitotic-specific cyclin-B (nimE) (Emericella nidulans (strain FGSC A4 / ATCC 38163 / CBS 112.46 / NRRL 194 / M139) (Aspergillus nidulans)).